A 105-amino-acid chain; its full sequence is MASRIKKGDQVIVIAGKDKGKQGEIIRIDGHRVVVSNVNFVKRHTKPNPQRGISGGLIDREAPIHVSNIKILNPMTGKGDRVGFKILGDGCKLRIFRSTGEVIGA.

The protein belongs to the universal ribosomal protein uL24 family. As to quaternary structure, part of the 50S ribosomal subunit.

In terms of biological role, one of two assembly initiator proteins, it binds directly to the 5'-end of the 23S rRNA, where it nucleates assembly of the 50S subunit. Its function is as follows. One of the proteins that surrounds the polypeptide exit tunnel on the outside of the subunit. The polypeptide is Large ribosomal subunit protein uL24 (Xylella fastidiosa (strain M23)).